A 193-amino-acid chain; its full sequence is Thymidine kinase (193 aa).

Residues 9-16 (SAMNAGKS) and 87-90 (DEAQ) contribute to the ATP site. Glu-88 serves as the catalytic Proton acceptor. 4 residues coordinate Zn(2+): Cys-145, Cys-147, Cys-182, and His-185.

Belongs to the thymidine kinase family. In terms of assembly, homotetramer.

The protein resides in the cytoplasm. It catalyses the reaction thymidine + ATP = dTMP + ADP + H(+). The sequence is that of Thymidine kinase from Idiomarina loihiensis (strain ATCC BAA-735 / DSM 15497 / L2-TR).